The following is a 218-amino-acid chain: Large ribosomal subunit protein bL25 (218 aa).

A disordered region spans residues 187-218; it reads SATAAVEEAKEDGAPEESAQGQGAAEAQETNK. Residues 202-218 show a composition bias toward low complexity; it reads EESAQGQGAAEAQETNK.

Belongs to the bacterial ribosomal protein bL25 family. CTC subfamily. In terms of assembly, part of the 50S ribosomal subunit; part of the 5S rRNA/L5/L18/L25 subcomplex. Contacts the 5S rRNA. Binds to the 5S rRNA independently of L5 and L18.

This is one of the proteins that binds to the 5S RNA in the ribosome where it forms part of the central protuberance. The sequence is that of Large ribosomal subunit protein bL25 from Anaplasma marginale (strain St. Maries).